Consider the following 71-residue polypeptide: Bacteriocin carnobacteriocin-A (71 aa).

The propeptide occupies 1-18 (MNNVKELSIKEMQQVTGG). Cysteine 40 and cysteine 69 are oxidised to a cystine.

The protein resides in the secreted. Has antibacterial activity. The polypeptide is Bacteriocin carnobacteriocin-A (cbnBA) (Carnobacterium maltaromaticum (Carnobacterium piscicola)).